A 348-amino-acid chain; its full sequence is Maintenance of mitochondrial morphology protein 1 (348 aa).

Residues 1–35 (MAGKADLGHTGISDNIVERQIFVPQPNNAWSFTQG) are Lumenal-facing. The helical transmembrane segment at 36–56 (LMCGQASVVVVLLVFIKFFVF) threads the bilayer. Topologically, residues 57–348 (SEAPPSSGAA…GKTEKVNGNE (292 aa)) are cytoplasmic. Residues 114 to 323 (NPESLDWFNV…EPKFQVVRLP (210 aa)) enclose the SMP-LTD domain. The tract at residues 328 to 348 (RSKNTREPVGAGKTEKVNGNE) is disordered.

The protein belongs to the MMM1 family. As to quaternary structure, homodimer. Component of the ER-mitochondria encounter structure (ERMES) or MDM complex, composed of MMM1, MDM10, MDM12 and MDM34. An MMM1 homodimer associates with one molecule of MDM12 on each side in a pairwise head-to-tail manner, and the SMP-LTD domains of MMM1 and MDM12 generate a continuous hydrophobic tunnel for phospholipid trafficking.

It is found in the endoplasmic reticulum membrane. Functionally, component of the ERMES/MDM complex, which serves as a molecular tether to connect the endoplasmic reticulum (ER) and mitochondria. Components of this complex are involved in the control of mitochondrial shape and protein biogenesis, and function in nonvesicular lipid trafficking between the ER and mitochondria. The MDM12-MMM1 subcomplex functions in the major beta-barrel assembly pathway that is responsible for biogenesis of all outer membrane beta-barrel proteins, and acts in a late step after the SAM complex. The MDM10-MDM12-MMM1 subcomplex further acts in the TOM40-specific pathway after the action of the MDM12-MMM1 complex. Essential for establishing and maintaining the structure of mitochondria and maintenance of mtDNA nucleoids. This Clavispora lusitaniae (strain ATCC 42720) (Yeast) protein is Maintenance of mitochondrial morphology protein 1.